The primary structure comprises 382 residues: Probable trehalose-phosphate phosphatase 2 (382 aa).

It belongs to the trehalose phosphatase family. A divalent metal cation is required as a cofactor. Expressed in roots and shoots.

It carries out the reaction alpha,alpha-trehalose 6-phosphate + H2O = alpha,alpha-trehalose + phosphate. The protein operates within glycan biosynthesis; trehalose biosynthesis. Functionally, removes the phosphate from trehalose 6-phosphate to produce free trehalose. Trehalose accumulation in plant may improve abiotic stress tolerance. This is Probable trehalose-phosphate phosphatase 2 (TPP2) from Oryza sativa subsp. japonica (Rice).